Here is a 405-residue protein sequence, read N- to C-terminus: Na(+)-translocating NADH-quinone reductase subunit F (405 aa).

The chain crosses the membrane as a helical span at residues 3-23 (IILGIVMFTVIVLALALMILF). Residues 32–124 (GDITIKVNDE…DMDIEVPEEV (93 aa)) form the 2Fe-2S ferredoxin-type domain. [2Fe-2S] cluster-binding residues include cysteine 67, cysteine 73, cysteine 76, and cysteine 108. Residues 127–267 (VKKWECTVIS…SGPFGEFFAK (141 aa)) form the FAD-binding FR-type domain.

Belongs to the NqrF family. In terms of assembly, composed of six subunits; NqrA, NqrB, NqrC, NqrD, NqrE and NqrF. It depends on [2Fe-2S] cluster as a cofactor. FAD is required as a cofactor.

It is found in the cell inner membrane. The enzyme catalyses a ubiquinone + n Na(+)(in) + NADH + H(+) = a ubiquinol + n Na(+)(out) + NAD(+). Functionally, NQR complex catalyzes the reduction of ubiquinone-1 to ubiquinol by two successive reactions, coupled with the transport of Na(+) ions from the cytoplasm to the periplasm. The first step is catalyzed by NqrF, which accepts electrons from NADH and reduces ubiquinone-1 to ubisemiquinone by a one-electron transfer pathway. This Neisseria gonorrhoeae (strain ATCC 700825 / FA 1090) protein is Na(+)-translocating NADH-quinone reductase subunit F.